Here is a 306-residue protein sequence, read N- to C-terminus: Pyridoxal 5'-phosphate synthase subunit PdxS (306 aa).

Asp-36 lines the D-ribose 5-phosphate pocket. Residue Lys-93 is the Schiff-base intermediate with D-ribose 5-phosphate of the active site. A D-ribose 5-phosphate-binding site is contributed by Gly-165. Arg-177 is a D-glyceraldehyde 3-phosphate binding site. Residues Gly-226 and 247–248 each bind D-ribose 5-phosphate; that span reads GS.

This sequence belongs to the PdxS/SNZ family. In terms of assembly, in the presence of PdxT, forms a dodecamer of heterodimers.

The enzyme catalyses aldehydo-D-ribose 5-phosphate + D-glyceraldehyde 3-phosphate + L-glutamine = pyridoxal 5'-phosphate + L-glutamate + phosphate + 3 H2O + H(+). Its pathway is cofactor biosynthesis; pyridoxal 5'-phosphate biosynthesis. In terms of biological role, catalyzes the formation of pyridoxal 5'-phosphate from ribose 5-phosphate (RBP), glyceraldehyde 3-phosphate (G3P) and ammonia. The ammonia is provided by the PdxT subunit. Can also use ribulose 5-phosphate and dihydroxyacetone phosphate as substrates, resulting from enzyme-catalyzed isomerization of RBP and G3P, respectively. In Nocardia farcinica (strain IFM 10152), this protein is Pyridoxal 5'-phosphate synthase subunit PdxS.